The primary structure comprises 388 residues: Protein TsgA homolog (388 aa).

12 helical membrane passes run 11–31 (WISF…GMIM), 50–70 (TFLN…IEII), 77–97 (IFSF…NSIF), 101–121 (INMF…TFII), 133–153 (LLLL…IVTA), 160–180 (IIWY…FLLT), 206–226 (VFLL…FISW), 244–264 (SLVS…SFII), 268–288 (NLYR…YCFI), 298–318 (YIII…ITLA), 332–352 (LILL…SPIV), and 360–380 (TLIS…LIYF).

Belongs to the major facilitator superfamily. TsgA family.

The protein resides in the cell membrane. This Buchnera aphidicola subsp. Acyrthosiphon pisum (strain Tuc7) protein is Protein TsgA homolog.